An 88-amino-acid polypeptide reads, in one-letter code: Phosphoribosyl-ATP pyrophosphatase (88 aa).

It belongs to the PRA-PH family.

Its subcellular location is the cytoplasm. It catalyses the reaction 1-(5-phospho-beta-D-ribosyl)-ATP + H2O = 1-(5-phospho-beta-D-ribosyl)-5'-AMP + diphosphate + H(+). It participates in amino-acid biosynthesis; L-histidine biosynthesis; L-histidine from 5-phospho-alpha-D-ribose 1-diphosphate: step 2/9. The protein is Phosphoribosyl-ATP pyrophosphatase of Cutibacterium acnes (strain DSM 16379 / KPA171202) (Propionibacterium acnes).